The sequence spans 332 residues: 4-hydroxythreonine-4-phosphate dehydrogenase (332 aa).

Substrate is bound by residues histidine 136 and threonine 137. Histidine 166, histidine 211, and histidine 266 together coordinate a divalent metal cation. 3 residues coordinate substrate: lysine 274, asparagine 283, and arginine 292.

The protein belongs to the PdxA family. Homodimer. Zn(2+) is required as a cofactor. It depends on Mg(2+) as a cofactor. Co(2+) serves as cofactor.

The protein localises to the cytoplasm. The enzyme catalyses 4-(phosphooxy)-L-threonine + NAD(+) = 3-amino-2-oxopropyl phosphate + CO2 + NADH. Its pathway is cofactor biosynthesis; pyridoxine 5'-phosphate biosynthesis; pyridoxine 5'-phosphate from D-erythrose 4-phosphate: step 4/5. Catalyzes the NAD(P)-dependent oxidation of 4-(phosphooxy)-L-threonine (HTP) into 2-amino-3-oxo-4-(phosphooxy)butyric acid which spontaneously decarboxylates to form 3-amino-2-oxopropyl phosphate (AHAP). The sequence is that of 4-hydroxythreonine-4-phosphate dehydrogenase from Wigglesworthia glossinidia brevipalpis.